The chain runs to 125 residues: Large ribosomal subunit protein bL12 (125 aa).

Belongs to the bacterial ribosomal protein bL12 family. In terms of assembly, homodimer. Part of the ribosomal stalk of the 50S ribosomal subunit. Forms a multimeric L10(L12)X complex, where L10 forms an elongated spine to which 2 to 4 L12 dimers bind in a sequential fashion. Binds GTP-bound translation factors.

In terms of biological role, forms part of the ribosomal stalk which helps the ribosome interact with GTP-bound translation factors. Is thus essential for accurate translation. In Ruegeria sp. (strain TM1040) (Silicibacter sp.), this protein is Large ribosomal subunit protein bL12.